Consider the following 258-residue polypeptide: Indole-3-glycerol phosphate synthase (258 aa).

Belongs to the TrpC family.

The enzyme catalyses 1-(2-carboxyphenylamino)-1-deoxy-D-ribulose 5-phosphate + H(+) = (1S,2R)-1-C-(indol-3-yl)glycerol 3-phosphate + CO2 + H2O. It participates in amino-acid biosynthesis; L-tryptophan biosynthesis; L-tryptophan from chorismate: step 4/5. This chain is Indole-3-glycerol phosphate synthase, found in Legionella pneumophila (strain Lens).